The following is a 309-amino-acid chain: Manganese ABC transporter substrate-binding lipoprotein PsaA (309 aa).

A signal peptide spans 1-19; the sequence is MKKLGTLLVLFLSAIILVA. Cys20 carries N-palmitoyl cysteine lipidation. Cys20 is lipidated: S-diacylglycerol cysteine. Mn(2+) is bound by residues His67, His139, Glu205, and Asp280.

It belongs to the bacterial solute-binding protein 9 family. Lipoprotein receptor antigen (Lrai) subfamily.

It localises to the cell membrane. Its function is as follows. Part of the ATP-binding cassette (ABC) transport system PsaABC involved in manganese import. Binds manganese with high affinity and specificity and delivers it to the membrane permease for translocation into the cytoplasm. Also acts as an adhesin which is involved on adherence to extracellular matrix. It is an important factor in pathogenesis and infection. In Streptococcus pneumoniae serotype 4 (strain ATCC BAA-334 / TIGR4), this protein is Manganese ABC transporter substrate-binding lipoprotein PsaA (psaA).